A 159-amino-acid polypeptide reads, in one-letter code: Lipoprotein signal peptidase (159 aa).

2 helical membrane-spanning segments follow: residues 59–79 and 87–107; these read PMIL…YVVF and FLIT…DRIL. Catalysis depends on residues Asp-113 and Asp-139. Residues 131–151 traverse the membrane as a helical segment; the sequence is LWPVFNIADSAITIGACVLVI.

The protein belongs to the peptidase A8 family.

The protein localises to the cell inner membrane. It carries out the reaction Release of signal peptides from bacterial membrane prolipoproteins. Hydrolyzes -Xaa-Yaa-Zaa-|-(S,diacylglyceryl)Cys-, in which Xaa is hydrophobic (preferably Leu), and Yaa (Ala or Ser) and Zaa (Gly or Ala) have small, neutral side chains.. Its pathway is protein modification; lipoprotein biosynthesis (signal peptide cleavage). This protein specifically catalyzes the removal of signal peptides from prolipoproteins. The polypeptide is Lipoprotein signal peptidase (Chlorobium phaeobacteroides (strain BS1)).